Here is a 131-residue protein sequence, read N- to C-terminus: Fluoride-specific ion channel FluC 2 (131 aa).

Transmembrane regions (helical) follow at residues 5–25 (SAVF…NLWI), 35–55 (WLEN…FMIG), 59–79 (PLLS…MSTF), and 95–115 (LLYV…GVFV). Residues glycine 71 and threonine 74 each coordinate Na(+).

This sequence belongs to the fluoride channel Fluc/FEX (TC 1.A.43) family.

Its subcellular location is the cell membrane. The enzyme catalyses fluoride(in) = fluoride(out). Its activity is regulated as follows. Na(+) is not transported, but it plays an essential structural role and its presence is essential for fluoride channel function. Fluoride-specific ion channel. Important for reducing fluoride concentration in the cell, thus reducing its toxicity. This Bacillus subtilis (strain 168) protein is Fluoride-specific ion channel FluC 2.